Here is a 195-residue protein sequence, read N- to C-terminus: Putative C-P lyase subunit protein HtxG (195 aa).

It belongs to the PhnH family.

Functionally, belongs to an operon involved in hypophosphite oxidation. Exact function not known. The sequence is that of Putative C-P lyase subunit protein HtxG (htxG) from Stutzerimonas stutzeri (Pseudomonas stutzeri).